A 312-amino-acid chain; its full sequence is Phosphatidate cytidylyltransferase (312 aa).

The disordered stretch occupies residues 1-31 (MASTDPGTGTPLDESVPGIKRAMRQSTKNTP). Transmembrane regions (helical) follow at residues 37–57 (LPAA…TLVF), 58–78 (APRI…HEVV), 85–105 (GYVI…WLTW), 110–130 (VGAL…RLVM), 157–177 (ATVF…LLVY), 186–206 (FCLM…GVLF), 223–243 (GFAG…TFLA), and 247–267 (PWVG…GDLV).

Belongs to the CDS family.

The protein localises to the cell membrane. It catalyses the reaction a 1,2-diacyl-sn-glycero-3-phosphate + CTP + H(+) = a CDP-1,2-diacyl-sn-glycerol + diphosphate. It participates in phospholipid metabolism; CDP-diacylglycerol biosynthesis; CDP-diacylglycerol from sn-glycerol 3-phosphate: step 3/3. The sequence is that of Phosphatidate cytidylyltransferase (cdsA) from Mycobacterium leprae (strain TN).